A 176-amino-acid chain; its full sequence is Large ribosomal subunit protein uL30 (176 aa).

Belongs to the universal ribosomal protein uL30 family. In terms of assembly, part of the 50S ribosomal subunit.

In Pyrobaculum arsenaticum (strain DSM 13514 / JCM 11321 / PZ6), this protein is Large ribosomal subunit protein uL30.